A 263-amino-acid polypeptide reads, in one-letter code: Acidic leucine-rich nuclear phosphoprotein 32 family member E (263 aa).

LRR repeat units lie at residues 43–64, 65–84, and 89–110; these read ELEF…PKLP, KLRK…DVLT, and NITY…EALA. An LRRCT domain is found at 123 to 161; it reads CEITNLEDYRENIFQRLSQITYLDGFDQEDNEAPDSEED. The tract at residues 146 to 263 is disordered; that stretch reads DGFDQEDNEA…PEDEGDEDED (118 aa). Acidic residues-rich tracts occupy residues 148–172, 180–203, and 214–242; these read FDQE…DDEE, AEED…EEEV, and RDEE…DEAA. Residues 202–263 form a ZID domain region; that stretch reads EVGLSYLMKE…PEDEGDEDED (62 aa).

This sequence belongs to the ANP32 family. As to quaternary structure, component of a SWR1-like complex. Interacts with H2A.Z/H2AZ1. In terms of processing, phosphorylated. The phosphorylation is nuclear localization signal (NLS)-dependent.

The protein localises to the cytoplasm. The protein resides in the nucleus. Functionally, histone chaperone that specifically mediates the genome-wide removal of histone H2A.Z/H2AZ1 from the nucleosome: removes H2A.Z/H2AZ1 from its normal sites of deposition, especially from enhancer and insulator regions. Not involved in deposition of H2A.Z/H2AZ1 in the nucleosome. May stabilize the evicted H2A.Z/H2AZ1-H2B dimer, thus shifting the equilibrium towards dissociation and the off-chromatin state. Inhibits activity of protein phosphatase 2A (PP2A). Does not inhibit protein phosphatase 1. May play a role in cerebellar development and synaptogenesis. This Xenopus laevis (African clawed frog) protein is Acidic leucine-rich nuclear phosphoprotein 32 family member E (anp32e).